We begin with the raw amino-acid sequence, 160 residues long: Lipoprotein signal peptidase (160 aa).

The next 4 helical transmembrane spans lie at Trp7–Val27, Leu39–Phe59, Gly62–Trp82, and Gly96–Val116. Active-site residues include Asp117 and Asp133. Residues Phe126–Ala146 form a helical membrane-spanning segment.

The protein belongs to the peptidase A8 family.

It localises to the cell inner membrane. The enzyme catalyses Release of signal peptides from bacterial membrane prolipoproteins. Hydrolyzes -Xaa-Yaa-Zaa-|-(S,diacylglyceryl)Cys-, in which Xaa is hydrophobic (preferably Leu), and Yaa (Ala or Ser) and Zaa (Gly or Ala) have small, neutral side chains.. It functions in the pathway protein modification; lipoprotein biosynthesis (signal peptide cleavage). Functionally, this protein specifically catalyzes the removal of signal peptides from prolipoproteins. This chain is Lipoprotein signal peptidase, found in Gloeothece citriformis (strain PCC 7424) (Cyanothece sp. (strain PCC 7424)).